Here is a 378-residue protein sequence, read N- to C-terminus: GDP-mannose-dependent alpha-mannosyltransferase (378 aa).

Belongs to the glycosyltransferase group 1 family. Glycosyltransferase 4 subfamily.

Its pathway is phospholipid metabolism; phosphatidylinositol metabolism. Catalyzes the addition of a mannose residue from GDP-D-mannose to GlcAGroAc2 to generate 1,2-di-O-C16/C18:1-(alpha-D-mannopyranosyl)-(1-4)-(alpha-D-glucopyranosyluronic acid)-(1-3)-glycerol(ManGlcAGroAc2). The protein is GDP-mannose-dependent alpha-mannosyltransferase (mgtA) of Mycobacterium tuberculosis (strain CDC 1551 / Oshkosh).